The primary structure comprises 438 residues: Putative cytochrome P450 140 (438 aa).

C381 contacts heme.

The protein belongs to the cytochrome P450 family. Heme is required as a cofactor.

This chain is Putative cytochrome P450 140 (cyp140), found in Mycobacterium bovis (strain ATCC BAA-935 / AF2122/97).